We begin with the raw amino-acid sequence, 381 residues long: Putative MgpC-like protein MPN_503 (381 aa).

Positions Met1–Ser109 are disordered. Over residues Glu13–Pro31 the composition is skewed to polar residues. 2 stretches are compositionally biased toward basic and acidic residues: residues Lys40–Asn51 and Asp61–Gly73. Positions Val89 to Ser109 are enriched in polar residues.

This sequence belongs to the MgpC family.

The protein is Putative MgpC-like protein MPN_503 of Mycoplasma pneumoniae (strain ATCC 29342 / M129 / Subtype 1) (Mycoplasmoides pneumoniae).